The primary structure comprises 88 residues: UPF0335 protein MexAM1_META1p2947 (88 aa).

It belongs to the UPF0335 family.

The protein is UPF0335 protein MexAM1_META1p2947 of Methylorubrum extorquens (strain ATCC 14718 / DSM 1338 / JCM 2805 / NCIMB 9133 / AM1) (Methylobacterium extorquens).